The following is a 352-amino-acid chain: Bifunctional protein FolD 1, mitochondrial (352 aa).

The transit peptide at 1–23 (MLMIARKALASAHTKAFRLATRD) directs the protein to the mitochondrion.

Belongs to the tetrahydrofolate dehydrogenase/cyclohydrolase family. In terms of assembly, homodimer.

The protein resides in the mitochondrion. The catalysed reaction is (6R)-5,10-methylene-5,6,7,8-tetrahydrofolate + NADP(+) = (6R)-5,10-methenyltetrahydrofolate + NADPH. It catalyses the reaction (6R)-5,10-methenyltetrahydrofolate + H2O = (6R)-10-formyltetrahydrofolate + H(+). It participates in one-carbon metabolism; tetrahydrofolate interconversion. Catalyzes the oxidation of 5,10-methylenetetrahydrofolate to 5,10-methenyltetrahydrofolate and then the hydrolysis of 5,10-methenyltetrahydrofolate to 10-formyltetrahydrofolate. In Arabidopsis thaliana (Mouse-ear cress), this protein is Bifunctional protein FolD 1, mitochondrial (FOLD1).